Reading from the N-terminus, the 427-residue chain is 5-hydroxybenzimidazole synthase BzaA (427 aa).

It belongs to the ThiC family. 5-hydroxybenzimidazole synthase subfamily. It depends on [4Fe-4S] cluster as a cofactor.

It carries out the reaction 5-amino-1-(5-phospho-beta-D-ribosyl)imidazole + AH2 + S-adenosyl-L-methionine = 5-hydroxybenzimidazole + 5'-deoxyadenosine + formate + L-methionine + A + NH4(+) + phosphate + 2 H(+). Its pathway is cofactor biosynthesis; adenosylcobalamin biosynthesis. Together with BzaB, catalyzes the conversion of aminoimidazole ribotide (AIR) to 5-hydroxybenzimidazole (5-HBI) in a radical S-adenosyl-L-methionine (SAM)-dependent reaction. Is thus involved in the anaerobic biosynthesis of dimethylbenzimidazole (DMB), the lower axial ligand of vitamin B12 (cobalamin). Requires BzaB for catalytic activity, as BzaA alone displays no activity. This chain is 5-hydroxybenzimidazole synthase BzaA, found in Eubacterium limosum.